A 289-amino-acid polypeptide reads, in one-letter code: ATP synthase gamma chain (289 aa).

It belongs to the ATPase gamma chain family. As to quaternary structure, F-type ATPases have 2 components, CF(1) - the catalytic core - and CF(0) - the membrane proton channel. CF(1) has five subunits: alpha(3), beta(3), gamma(1), delta(1), epsilon(1). CF(0) has three main subunits: a, b and c.

It localises to the cell inner membrane. Functionally, produces ATP from ADP in the presence of a proton gradient across the membrane. The gamma chain is believed to be important in regulating ATPase activity and the flow of protons through the CF(0) complex. The protein is ATP synthase gamma chain of Erwinia tasmaniensis (strain DSM 17950 / CFBP 7177 / CIP 109463 / NCPPB 4357 / Et1/99).